A 246-amino-acid polypeptide reads, in one-letter code: NAD(P)H-quinone oxidoreductase subunit K (246 aa).

[4Fe-4S] cluster contacts are provided by cysteine 62, cysteine 63, cysteine 127, and cysteine 158.

It belongs to the complex I 20 kDa subunit family. As to quaternary structure, NDH-1 can be composed of about 15 different subunits; different subcomplexes with different compositions have been identified which probably have different functions. It depends on [4Fe-4S] cluster as a cofactor.

The protein localises to the cellular thylakoid membrane. It catalyses the reaction a plastoquinone + NADH + (n+1) H(+)(in) = a plastoquinol + NAD(+) + n H(+)(out). The enzyme catalyses a plastoquinone + NADPH + (n+1) H(+)(in) = a plastoquinol + NADP(+) + n H(+)(out). Functionally, NDH-1 shuttles electrons from an unknown electron donor, via FMN and iron-sulfur (Fe-S) centers, to quinones in the respiratory and/or the photosynthetic chain. The immediate electron acceptor for the enzyme in this species is believed to be plastoquinone. Couples the redox reaction to proton translocation, and thus conserves the redox energy in a proton gradient. Cyanobacterial NDH-1 also plays a role in inorganic carbon-concentration. The polypeptide is NAD(P)H-quinone oxidoreductase subunit K (Parasynechococcus marenigrum (strain WH8102)).